The chain runs to 92 residues: Small ribosomal subunit protein uS19 (92 aa).

Belongs to the universal ribosomal protein uS19 family.

Protein S19 forms a complex with S13 that binds strongly to the 16S ribosomal RNA. The sequence is that of Small ribosomal subunit protein uS19 from Corynebacterium kroppenstedtii (strain DSM 44385 / JCM 11950 / CIP 105744 / CCUG 35717).